We begin with the raw amino-acid sequence, 813 residues long: Polycomb group protein FERTILIZATION-INDEPENDENT SEED 2 (813 aa).

Residues 1–27 (MARKSIRGKEVVMVSDDDDDDDDVDDD) are disordered. The segment covering 15-26 (SDDDDDDDDVDD) has biased composition (acidic residues). Residues 134-155 (CPFCLIPCGGHEGLQLHLKSSH) form a C2H2-type zinc finger. Disordered stretches follow at residues 197–216 (SPLT…DDSN), 232–261 (DLPR…SEKI), and 274–648 (ESSE…RKEL). The segment covering 232 to 246 (DLPRGTENDSTHVND) has biased composition (basic and acidic residues). One copy of the A-1 repeat lies at 243–264 (HVNDDNVSSPPRAHSSEKISDI). Positions 243–542 (HVNDDNVSSP…HSSKKNKSTR (300 aa)) are 12 X approximate repeat A. One copy of the B-1 repeat lies at 265-281 (LTTTQLAIAESSEPKVP). The segment at 265 to 640 (LTTTQLAIAE…KAEPSEPKVT (376 aa)) is 7 X approximate repeat B. The A-2 repeat unit spans residues 282–304 (HVNDGNVSSPPRAHSSAEKNEST). Basic and acidic residues-rich tracts occupy residues 296 to 307 (SSAEKNESTHVN), 319 to 331 (HSLE…HVNE), and 344 to 353 (KKNESTHMND). Residues 305-327 (HVNDDDDVSSPPRAHSLEKNEST) form an A-3 repeat. An A-4 repeat occupies 328 to 349 (HVNEDNISSPPKAHSSKKNEST). The stretch at 350 to 371 (HMNDEDVSFPPRTRSSKETSDI) is one A-5 repeat. The stretch at 372–388 (LTTTQPAIVEPSEPKVR) is one B-2 repeat. Residues 388-402 (RRGSRRKQLYAKRYK) are compositionally biased toward basic residues. The stretch at 403–419 (ARETQPAIAESSEPKVL) is one B-3 repeat. Basic and acidic residues-rich tracts occupy residues 414-423 (SEPKVLHVND) and 453-462 (SEPKVPHVND). An A-6 repeat occupies 420 to 441 (HVNDENVSSPPEAHSLEKASDI). Residues 442-458 (LTTTQPAIAESSEPKVP) form a B-4 repeat. Residues 459–481 (HVNDENVSSTPRAHSSKKNKSTR) form an A-7 repeat. The span at 472–481 (HSSKKNKSTR) shows a compositional bias: basic residues. Residues 482–502 (KNVDNVPSPPKTRSSKKTSDI) form an A-8 repeat. The span at 501 to 512 (DILTTTQPTIAE) shows a compositional bias: polar residues. A B-5 repeat occupies 503–519 (LTTTQPTIAESSEPKVR). A compositionally biased stretch (basic and acidic residues) spans 514–523 (SEPKVRHVND). The A-9 repeat unit spans residues 520-542 (HVNDDNVSSTPRAHSSKKNKSTR). Residues 543 to 563 (KNDDNIPSPPKTRSSKKTSNI) form an A-10 repeat. A B-6 repeat occupies 564–579 (LTRTQPAIAESEPKVP). Over residues 574-586 (SEPKVPHVNDDKV) the composition is skewed to basic and acidic residues. An A-11 repeat occupies 580 to 601 (HVNDDKVSSTPRAHSSKKNKST). The segment covering 593–602 (HSSKKNKSTH) has biased composition (basic residues). Residues 602 to 623 (HKKDDNASLPPKTRSSKKTSDI) form an A-12 repeat. Residues 624-640 (LATTQPAKAEPSEPKVT) form a B-7 repeat. The VEFS-box stretch occupies residues 648-783 (LHAERCEAKR…CAKTFHKCTT (136 aa)).

It belongs to the VEFS (VRN2-EMF2-FIS2-SU(Z)12) family. As to quaternary structure, probably indirectly associated with FIE and/or MEA. In plants, PcG complexes are probably composed of a member of the EZ family (CLF or MEA), FIE, and a member of the VEFS family (FIS2, VRN2 or EMF2). Weakly expressed. Expressed in late siliques.

It localises to the nucleus. In terms of biological role, polycomb group (PcG) protein. PcG proteins act by forming multiprotein complexes, which are required to maintain the transcriptionally repressive state of homeotic genes throughout development. PcG proteins are not required to initiate repression, but to maintain it during later stages of development. They probably act via the methylation of histones, rendering chromatin heritably changed in its expressibility. Required to prevent the proliferation of the central cell by repressing unknown target genes before fertilization. Regulates the anteroposterior organization of the endosperm. The polypeptide is Polycomb group protein FERTILIZATION-INDEPENDENT SEED 2 (Arabidopsis thaliana (Mouse-ear cress)).